A 481-amino-acid polypeptide reads, in one-letter code: Glutamyl-tRNA(Gln) amidotransferase subunit A (481 aa).

Catalysis depends on charge relay system residues lysine 74 and serine 149. Serine 173 functions as the Acyl-ester intermediate in the catalytic mechanism.

It belongs to the amidase family. GatA subfamily. In terms of assembly, heterotrimer of A, B and C subunits.

The enzyme catalyses L-glutamyl-tRNA(Gln) + L-glutamine + ATP + H2O = L-glutaminyl-tRNA(Gln) + L-glutamate + ADP + phosphate + H(+). Functionally, allows the formation of correctly charged Gln-tRNA(Gln) through the transamidation of misacylated Glu-tRNA(Gln) in organisms which lack glutaminyl-tRNA synthetase. The reaction takes place in the presence of glutamine and ATP through an activated gamma-phospho-Glu-tRNA(Gln). The polypeptide is Glutamyl-tRNA(Gln) amidotransferase subunit A (Francisella tularensis subsp. tularensis (strain FSC 198)).